The primary structure comprises 365 residues: DNA replication and repair protein RecF (365 aa).

30–37 (GDNGEGKT) is a binding site for ATP.

The protein belongs to the RecF family.

It localises to the cytoplasm. Its function is as follows. The RecF protein is involved in DNA metabolism; it is required for DNA replication and normal SOS inducibility. RecF binds preferentially to single-stranded, linear DNA. It also seems to bind ATP. The chain is DNA replication and repair protein RecF from Leptospira interrogans serogroup Icterohaemorrhagiae serovar Lai (strain 56601).